The chain runs to 880 residues: Kinesin heavy chain (880 aa).

In terms of domain architecture, Kinesin motor spans 4–327 (SIKVVCRFRP…LRFGMRAKAI (324 aa)). Residues 85-92 (GQTGAGKS) and 235-242 (GSEKVGKT) each bind ATP. A disordered region spans residues 388–426 (VSGAKAAAAQTPRPSTPSRLATESRAETPVAERSATPGI). Residues 399–408 (PRPSTPSRLA) show a composition bias toward polar residues. Residues 428 to 849 (IDKDEREEFL…QEKLTTASHR (422 aa)) adopt a coiled-coil conformation.

This sequence belongs to the TRAFAC class myosin-kinesin ATPase superfamily. Kinesin family. Kinesin subfamily.

It is found in the cytoplasm. It localises to the cytoskeleton. Its function is as follows. Kinesin is a microtubule-associated force-producing protein that may play a role in organelle transport. Its motor activity is directed toward the microtubule's plus end. This chain is Kinesin heavy chain (klp1), found in Botryotinia fuckeliana (Noble rot fungus).